Consider the following 308-residue polypeptide: Hydroxyacylglutathione hydrolase, mitochondrial (308 aa).

The transit peptide at 1–13 (MVLGRGLLGRRSL) directs the protein to the mitochondrion. Residues His-102, His-104, Asp-106, and His-107 each coordinate Zn(2+). The residue at position 116 (Lys-116) is an N6-acetyllysine. 2 residues coordinate Zn(2+): His-158 and Asp-182. Residues 191 to 193 (KFY) and 221 to 223 (HEY) contribute to the substrate site. His-221 serves as a coordination point for Zn(2+). An N6-acetyllysine; alternate modification is found at Lys-229. Lys-229 carries the post-translational modification N6-succinyllysine; alternate. 297 to 300 (RKEK) provides a ligand contact to substrate.

It belongs to the metallo-beta-lactamase superfamily. Glyoxalase II family. Monomer. It depends on Zn(2+) as a cofactor. As to expression, testis.

Its subcellular location is the mitochondrion matrix. The protein localises to the cytoplasm. It catalyses the reaction an S-(2-hydroxyacyl)glutathione + H2O = a 2-hydroxy carboxylate + glutathione + H(+). It carries out the reaction (R)-S-lactoylglutathione + H2O = (R)-lactate + glutathione + H(+). It functions in the pathway secondary metabolite metabolism; methylglyoxal degradation; (R)-lactate from methylglyoxal: step 2/2. Functionally, thiolesterase that catalyzes the hydrolysis of S-D-lactoyl-glutathione to form glutathione and D-lactic acid. The protein is Hydroxyacylglutathione hydrolase, mitochondrial (HAGH) of Macaca fascicularis (Crab-eating macaque).